Consider the following 95-residue polypeptide: Large ribosomal subunit protein uL23 (95 aa).

It belongs to the universal ribosomal protein uL23 family. In terms of assembly, part of the 50S ribosomal subunit. Contacts protein L29.

Its function is as follows. Binds to 23S rRNA. One of the proteins that surrounds the polypeptide exit tunnel on the outside of the ribosome. This Methanopyrus kandleri (strain AV19 / DSM 6324 / JCM 9639 / NBRC 100938) protein is Large ribosomal subunit protein uL23.